The following is a 117-amino-acid chain: Large ribosomal subunit protein bL20 (117 aa).

It belongs to the bacterial ribosomal protein bL20 family.

Binds directly to 23S ribosomal RNA and is necessary for the in vitro assembly process of the 50S ribosomal subunit. It is not involved in the protein synthesizing functions of that subunit. The chain is Large ribosomal subunit protein bL20 from Nitratidesulfovibrio vulgaris (strain DP4) (Desulfovibrio vulgaris).